The primary structure comprises 291 residues: Bifunctional protein FolD (291 aa).

NADP(+) is bound by residues 166–168 (GAS) and Ile-232.

It belongs to the tetrahydrofolate dehydrogenase/cyclohydrolase family. Homodimer.

It catalyses the reaction (6R)-5,10-methylene-5,6,7,8-tetrahydrofolate + NADP(+) = (6R)-5,10-methenyltetrahydrofolate + NADPH. The enzyme catalyses (6R)-5,10-methenyltetrahydrofolate + H2O = (6R)-10-formyltetrahydrofolate + H(+). Its pathway is one-carbon metabolism; tetrahydrofolate interconversion. In terms of biological role, catalyzes the oxidation of 5,10-methylenetetrahydrofolate to 5,10-methenyltetrahydrofolate and then the hydrolysis of 5,10-methenyltetrahydrofolate to 10-formyltetrahydrofolate. The protein is Bifunctional protein FolD of Photorhabdus laumondii subsp. laumondii (strain DSM 15139 / CIP 105565 / TT01) (Photorhabdus luminescens subsp. laumondii).